The chain runs to 131 residues: MRHYEIVFIVHPDQSEQVPAMIERYRTLVTSNGGTIHRLEDWGRRQLAYPIQKIHKAHYVLMNIEVSQEVLNELEHAFKFNDAVLRHLTLNTDEAVTAPSPMMKEEKSKSLLAKDEAAAPAPAPATEQATA.

Residues 96–131 (VTAPSPMMKEEKSKSLLAKDEAAAPAPAPATEQATA) form a disordered region. Positions 103–117 (MKEEKSKSLLAKDEA) are enriched in basic and acidic residues. A compositionally biased stretch (low complexity) spans 118–131 (AAPAPAPATEQATA).

It belongs to the bacterial ribosomal protein bS6 family.

Functionally, binds together with bS18 to 16S ribosomal RNA. The chain is Small ribosomal subunit protein bS6 from Methylobacillus flagellatus (strain ATCC 51484 / DSM 6875 / VKM B-1610 / KT).